Reading from the N-terminus, the 427-residue chain is Histidinol dehydrogenase (427 aa).

NAD(+)-binding residues include Tyr-125, Gln-186, and Asn-209. 3 residues coordinate substrate: Ser-234, Gln-256, and His-259. 2 residues coordinate Zn(2+): Gln-256 and His-259. Catalysis depends on proton acceptor residues Glu-325 and His-326. Substrate-binding residues include His-326, Asp-359, Glu-413, and His-419. Residue Asp-359 coordinates Zn(2+). His-419 lines the Zn(2+) pocket.

The protein belongs to the histidinol dehydrogenase family. It depends on Zn(2+) as a cofactor.

The enzyme catalyses L-histidinol + 2 NAD(+) + H2O = L-histidine + 2 NADH + 3 H(+). It functions in the pathway amino-acid biosynthesis; L-histidine biosynthesis; L-histidine from 5-phospho-alpha-D-ribose 1-diphosphate: step 9/9. Functionally, catalyzes the sequential NAD-dependent oxidations of L-histidinol to L-histidinaldehyde and then to L-histidine. This chain is Histidinol dehydrogenase, found in Leptospira interrogans serogroup Icterohaemorrhagiae serovar copenhageni (strain Fiocruz L1-130).